We begin with the raw amino-acid sequence, 272 residues long: Bis(5'-nucleosyl)-tetraphosphatase, symmetrical (272 aa).

The protein belongs to the Ap4A hydrolase family.

It catalyses the reaction P(1),P(4)-bis(5'-adenosyl) tetraphosphate + H2O = 2 ADP + 2 H(+). Its function is as follows. Hydrolyzes diadenosine 5',5'''-P1,P4-tetraphosphate to yield ADP. The sequence is that of Bis(5'-nucleosyl)-tetraphosphatase, symmetrical from Wigglesworthia glossinidia brevipalpis.